The sequence spans 416 residues: Tyrosine--tRNA ligase (416 aa).

Residue Tyr37 participates in L-tyrosine binding. Residues 42–51 (PTADSLHVGN) carry the 'HIGH' region motif. The L-tyrosine site is built by Tyr176 and Gln180. A 'KMSKS' region motif is present at residues 236-240 (KMGKS). Lys239 is a binding site for ATP. The S4 RNA-binding domain occupies 350–416 (LPAFRVFQEA…KKKHILLRPV (67 aa)).

It belongs to the class-I aminoacyl-tRNA synthetase family. TyrS type 1 subfamily. In terms of assembly, homodimer.

The protein resides in the cytoplasm. It catalyses the reaction tRNA(Tyr) + L-tyrosine + ATP = L-tyrosyl-tRNA(Tyr) + AMP + diphosphate + H(+). Catalyzes the attachment of tyrosine to tRNA(Tyr) in a two-step reaction: tyrosine is first activated by ATP to form Tyr-AMP and then transferred to the acceptor end of tRNA(Tyr). In Gluconobacter oxydans (strain 621H) (Gluconobacter suboxydans), this protein is Tyrosine--tRNA ligase.